A 93-amino-acid polypeptide reads, in one-letter code: YcgL domain-containing protein PSHAb0508 (93 aa).

In terms of domain architecture, YcgL spans 1–85 (MLTAVYKSKK…PQENLLSQLR (85 aa)).

In Pseudoalteromonas translucida (strain TAC 125), this protein is YcgL domain-containing protein PSHAb0508.